We begin with the raw amino-acid sequence, 325 residues long: L-lactate dehydrogenase 1 (325 aa).

Residues V17, D38, K43, Y68, and 82–83 (GA) contribute to the NAD(+) site. Residues Q85, R91, and 123-126 (NPVD) each bind substrate. NAD(+) is bound by residues 121-123 (AAN) and S146. A substrate-binding site is contributed by 151–154 (DTAR). Beta-D-fructose 1,6-bisphosphate is bound by residues R156 and H171. Residue H178 is the Proton acceptor of the active site. Residue Y223 is modified to Phosphotyrosine. T232 is a substrate binding site.

It belongs to the LDH/MDH superfamily. LDH family. As to quaternary structure, homotetramer.

Its subcellular location is the cytoplasm. It catalyses the reaction (S)-lactate + NAD(+) = pyruvate + NADH + H(+). The protein operates within fermentation; pyruvate fermentation to lactate; (S)-lactate from pyruvate: step 1/1. Its activity is regulated as follows. Allosterically activated by fructose 1,6-bisphosphate (FBP). Functionally, catalyzes the conversion of lactate to pyruvate. This chain is L-lactate dehydrogenase 1, found in Lactococcus lactis subsp. cremoris (Streptococcus cremoris).